The sequence spans 459 residues: Chaperone SurA (459 aa).

The first 23 residues, 1-23 (MNHRLVALSVASLALLAPLTVPA), serve as a signal peptide directing secretion. PpiC domains lie at 197-301 (VQQI…KVLE) and 312-411 (VTQS…QLME).

It localises to the periplasm. It catalyses the reaction [protein]-peptidylproline (omega=180) = [protein]-peptidylproline (omega=0). In terms of biological role, chaperone involved in the correct folding and assembly of outer membrane proteins. Recognizes specific patterns of aromatic residues and the orientation of their side chains, which are found more frequently in integral outer membrane proteins. May act in both early periplasmic and late outer membrane-associated steps of protein maturation. This is Chaperone SurA from Albidiferax ferrireducens (strain ATCC BAA-621 / DSM 15236 / T118) (Rhodoferax ferrireducens).